A 151-amino-acid chain; its full sequence is Chemokine-like factor (151 aa).

The 121-residue stretch at 13-133 (FCLSLKCFVK…DCALMCQKLR (121 aa)) folds into the MARVEL domain. A run of 4 helical transmembrane segments spans residues 19 to 39 (CFVK…FIVA), 45 to 65 (YIVI…LYMC), 74 to 94 (FFWP…MLIV), and 107 to 127 (IMVG…DCAL). N-linked (GlcNAc...) asparagine glycosylation is present at asparagine 142.

It belongs to the chemokine-like factor family. As to expression, both isoforms have highest expression levels in testis with relatively lower expression level in liver, spleen, lung, brain and heart and barely detectable levels in skeletal muscle and kidney were barely detected. In most tissues, isoform CKLF2 has higher expression levels than isoform CKLF1.

Its subcellular location is the secreted. It is found in the membrane. Its function is as follows. May play an important role in inflammation and regeneration of skeletal muscle. Essential for embryonic development. In terms of biological role, has chemotactic response in monocytes, neutrophils and lymphocytes. Binds CCR4. The polypeptide is Chemokine-like factor (Cklf) (Rattus norvegicus (Rat)).